We begin with the raw amino-acid sequence, 303 residues long: Signal recognition particle receptor FtsY (303 aa).

GTP contacts are provided by residues 108-115 (GVNGVGKT), 190-194 (DTAGR), and 254-257 (TKLD).

This sequence belongs to the GTP-binding SRP family. FtsY subfamily. Part of the signal recognition particle protein translocation system, which is composed of SRP and FtsY. SRP is a ribonucleoprotein composed of Ffh and a 4.5S RNA molecule.

It localises to the cell inner membrane. The protein resides in the cytoplasm. It catalyses the reaction GTP + H2O = GDP + phosphate + H(+). Its function is as follows. Involved in targeting and insertion of nascent membrane proteins into the cytoplasmic membrane. Acts as a receptor for the complex formed by the signal recognition particle (SRP) and the ribosome-nascent chain (RNC). Interaction with SRP-RNC leads to the transfer of the RNC complex to the Sec translocase for insertion into the membrane, the hydrolysis of GTP by both Ffh and FtsY, and the dissociation of the SRP-FtsY complex into the individual components. The sequence is that of Signal recognition particle receptor FtsY from Rickettsia prowazekii (strain Madrid E).